The following is a 295-amino-acid chain: MVRRLTSPRLEFEAAAIYEYPEHLRSFLNDLPTRPGVYLFHGESDTMPLYIGKSINIRSRVLSHLRTPDEAAMLRQSRRISWICTAGEIGALLLEARLIKEQQPLFNKRLRRNRQLCALQLNEKRVDVVYAKEVDFSRAPNLFGLFANRRAALQALQTIADEQKLCYGLLGLEPLSRGRACFRSALKRCAGACCGKESHDDHALRLRQSLERLRVVCWPWKGAVALKEQHPEMTQYHIIQNWLWLGAVNSLKEATTLIRAPAGFDHDGYKILCKPLLSGNYEITELDPVNDQQAS.

The 76-residue stretch at threonine 33–lysine 108 folds into the GIY-YIG domain.

In terms of biological role, incises the DNA at the 3' side of a lesion during nucleotide excision repair. Incises the DNA farther away from the lesion than UvrC. Not able to incise the 5' site of a lesion. When a lesion remains because UvrC is not able to induce the 3' incision, Cho incises the DNA. Then UvrC makes the 5' incision. The combined action of Cho and UvrC broadens the substrate range of nucleotide excision repair. This Escherichia coli O6:H1 (strain CFT073 / ATCC 700928 / UPEC) protein is Excinuclease cho (cho).